Consider the following 259-residue polypeptide: 5'-nucleotidase SurE (259 aa).

D13, D14, S44, and N101 together coordinate a divalent metal cation.

It belongs to the SurE nucleotidase family. It depends on a divalent metal cation as a cofactor.

It localises to the cytoplasm. The catalysed reaction is a ribonucleoside 5'-phosphate + H2O = a ribonucleoside + phosphate. In terms of biological role, nucleotidase that shows phosphatase activity on nucleoside 5'-monophosphates. The protein is 5'-nucleotidase SurE of Flavobacterium johnsoniae (strain ATCC 17061 / DSM 2064 / JCM 8514 / BCRC 14874 / CCUG 350202 / NBRC 14942 / NCIMB 11054 / UW101) (Cytophaga johnsonae).